The chain runs to 567 residues: MAQRIFTLILLLCSTSAFAGLFDAPGRSQFVPADRAFVFDFQQNQHDLTLSWQVKEGYYLYRKQISITPTKADIAAVQLPTGVWHEDEFYGKSEIYRKRLNVPVTVNQAAAGATLTVTYQGCADAGFCYPPETKTVPLSEVAAAIDATPTPAVTQTSETSKPAAQLPFSALWALLIGIGIAFTPCVLPMYPLISGIVLGGRQRLSTGRALLLAFIYVQGMALTYTALGLVVAAAGLQFQAALQHPYVLIGLAIVFTLLALSMFGLFTLQLPSSLQTRLTLMSNRQQGGSPGGVFVMGAIAGLICSPCTTAPLSAILLYIAQSGNMWLGGGTLYLYALGMGLPLMLVTVFGNRLLPKSGPWMAHVKTAFGFVILALPVFLLERIIGEAWGLRLWSLLGVAFFGWAFITSLQARRAWMRIVQIILLAAALISVRPLQDWAFGSPSAQAPAHLNFTAISTVDELNQALAQAKGKPVMLDFYADWCVACKEFEKYTFSDPRVQQALGDTVLLQANVTANNAQDVALLKHLQVLGLPTILFFNTQGQEQPQSRVTGFMDAATFSAHLHDRQP.

The N-terminal stretch at 1-19 (MAQRIFTLILLLCSTSAFA) is a signal peptide. Intrachain disulfides connect Cys122–Cys128 and Cys185–Cys307. The next 7 helical transmembrane spans lie at 170–192 (ALWALLIGIGIAFTPCVLPMYPL), 212–234 (LAFIYVQGMALTYTALGLVVAAA), 246–268 (YVLIGLAIVFTLLALSMFGLFTL), 297–319 (GAIAGLICSPCTTAPLSAILLYI), 326–348 (WLGGGTLYLYALGMGLPLMLVTV), 358–380 (GPWMAHVKTAFGFVILALPVFLL), and 387–409 (AWGLRLWSLLGVAFFGWAFITSL). The Thioredoxin domain maps to 435–567 (QDWAFGSPSA…FSAHLHDRQP (133 aa)). An intrachain disulfide couples Cys482 to Cys485.

This sequence belongs to the thioredoxin family. DsbD subfamily.

Its subcellular location is the cell inner membrane. It carries out the reaction [protein]-dithiol + NAD(+) = [protein]-disulfide + NADH + H(+). It catalyses the reaction [protein]-dithiol + NADP(+) = [protein]-disulfide + NADPH + H(+). Required to facilitate the formation of correct disulfide bonds in some periplasmic proteins and for the assembly of the periplasmic c-type cytochromes. Acts by transferring electrons from cytoplasmic thioredoxin to the periplasm. This transfer involves a cascade of disulfide bond formation and reduction steps. This Salmonella typhimurium (strain LT2 / SGSC1412 / ATCC 700720) protein is Thiol:disulfide interchange protein DsbD.